The chain runs to 314 residues: MKEIVRALEGYGPPKDKAAEQCGWQAGGALCPGGLCCSQYGWCANTPEYCGSGCQSQCDGGGGGEDGGIDLGSIISRSTFEEMLKHRNDAACPAKGFYTYDAFISAAKAFPAFGTTGDVDTRKREIAAFFGQTSHATTGGWPTAPDGPYAWGYCYKEELNQASSYCSPSPAYPCAPGKKYYGRGPIQLSWNYNYGQCGQALGLDLLNNPDLVATDRVISFKAAIWFWMTPQFPKPSCHDVITGQWSPTGHDISAGRAPGYGVITNIINGGLECGRGWDARVEDRIGFYKRYCDMFAVGYGSNLDCYNQTPFGLG.

The signal sequence occupies residues 1 to 19 (MKEIVRALEGYGPPKDKAA). The 41-residue stretch at 20–60 (EQCGWQAGGALCPGGLCCSQYGWCANTPEYCGSGCQSQCDG) folds into the Chitin-binding type-1 domain. 7 cysteine pairs are disulfide-bonded: Cys22/Cys37, Cys31/Cys43, Cys36/Cys50, Cys54/Cys58, Cys92/Cys154, Cys166/Cys174, and Cys273/Cys305.

This sequence belongs to the glycosyl hydrolase 19 family. Chitinase class I subfamily.

Its function is as follows. Inactive chitinase-like protein that does not exhibit hydrolytic activity toward chitin. Binds strongly to chitin and possesses antifungal activity toward the fungal pathogen Altenaria alternata in plate assays. Inhibits the growth of Fusarium oxysporum on plate assays. Probably involved in defense against fungal pathogens through a mechanism that only involves carbohydrate binding. The polypeptide is Inactive chitinase-like protein 1 (Hevea brasiliensis (Para rubber tree)).